Here is a 293-residue protein sequence, read N- to C-terminus: 4-hydroxy-tetrahydrodipicolinate synthase (293 aa).

Residue T45 coordinates pyruvate. Y133 serves as the catalytic Proton donor/acceptor. The active-site Schiff-base intermediate with substrate is the K162. I204 provides a ligand contact to pyruvate.

This sequence belongs to the DapA family. In terms of assembly, homotetramer; dimer of dimers.

It localises to the cytoplasm. The enzyme catalyses L-aspartate 4-semialdehyde + pyruvate = (2S,4S)-4-hydroxy-2,3,4,5-tetrahydrodipicolinate + H2O + H(+). It participates in amino-acid biosynthesis; L-lysine biosynthesis via DAP pathway; (S)-tetrahydrodipicolinate from L-aspartate: step 3/4. In terms of biological role, catalyzes the condensation of (S)-aspartate-beta-semialdehyde [(S)-ASA] and pyruvate to 4-hydroxy-tetrahydrodipicolinate (HTPA). This chain is 4-hydroxy-tetrahydrodipicolinate synthase, found in Mesorhizobium japonicum (strain LMG 29417 / CECT 9101 / MAFF 303099) (Mesorhizobium loti (strain MAFF 303099)).